A 355-amino-acid chain; its full sequence is Protein-glutamate methylesterase/protein-glutamine glutaminase 3 (355 aa).

A Response regulatory domain is found at 8-126 (RVLVVDDSPT…AEELRRWGKE (119 aa)). Asp-59 is subject to 4-aspartylphosphate. The 186-residue stretch at 152–337 (PPTGARVDIF…LASMPELILQ (186 aa)) folds into the CheB-type methylesterase domain. Residues Ser-166, His-193, and Asp-284 contribute to the active site.

Belongs to the CheB family. Post-translationally, phosphorylated by CheA. Phosphorylation of the N-terminal regulatory domain activates the methylesterase activity.

The protein resides in the cytoplasm. It catalyses the reaction [protein]-L-glutamate 5-O-methyl ester + H2O = L-glutamyl-[protein] + methanol + H(+). The enzyme catalyses L-glutaminyl-[protein] + H2O = L-glutamyl-[protein] + NH4(+). Functionally, involved in chemotaxis. Part of a chemotaxis signal transduction system that modulates chemotaxis in response to various stimuli. Catalyzes the demethylation of specific methylglutamate residues introduced into the chemoreceptors (methyl-accepting chemotaxis proteins or MCP) by CheR. Also mediates the irreversible deamidation of specific glutamine residues to glutamic acid. In Myxococcus xanthus (strain DK1622), this protein is Protein-glutamate methylesterase/protein-glutamine glutaminase 3.